Consider the following 136-residue polypeptide: MLMPKRVKYRKPFSAPRIKGVAKRGATVSFGEYGLKALEPKWVTARQIEAARIVISRYAKKKGKMWTRVFPDKAITKHPAETRMGKGKGAPDHWVAVVKPGHILFEVEGLDLDTTKRAMRMASDKLPIKTKLVSRR.

It belongs to the universal ribosomal protein uL16 family. As to quaternary structure, part of the 50S ribosomal subunit.

Binds 23S rRNA and is also seen to make contacts with the A and possibly P site tRNAs. The chain is Large ribosomal subunit protein uL16 from Elusimicrobium minutum (strain Pei191).